Consider the following 105-residue polypeptide: Large ribosomal subunit protein bL21c (105 aa).

This sequence belongs to the bacterial ribosomal protein bL21 family. As to quaternary structure, part of the 50S ribosomal subunit.

It localises to the plastid. The protein resides in the chloroplast. In terms of biological role, this protein binds to 23S rRNA. This Phaeodactylum tricornutum (strain CCAP 1055/1) protein is Large ribosomal subunit protein bL21c.